The sequence spans 295 residues: MNDSRYIGRFAPTPSGFLHFGSLVAALASWLDARAVNGRWLLRVEDTDPPREMPGARDAILQTLERYGLEWDGEVVFQSQRHPAYAQVVDRMFNMGLAYACTCSRKQLEGYNGIYPGFCRNAGHAREGAAIRLRVPELIYRFTDRVQGTFQQHLGREVGDFVIQRRDGLYAYQLAVVLDDAWQGVTDIVRGADLLDNTPRQLYLQELLGFSQPRYLHIPLIVQPDGHKLGKSYRSPPLEASQATPLLLRALRALGQEADPQLLTATPAEVLAVARQRWQPEAIAQRTTVPEADLY.

Residues 9-13 (RFAPT) and E45 each bind L-glutamate. A 'HIGH' region motif is present at residues 12-22 (PTPSGFLHFGS). Zn(2+) contacts are provided by C101, C103, Y115, and C119. Residues Y172 and R190 each coordinate L-glutamate. Residues 228-232 (KLGKS) carry the 'KMSKS' region motif. K231 is a binding site for ATP.

Belongs to the class-I aminoacyl-tRNA synthetase family. GluQ subfamily. The cofactor is Zn(2+).

Functionally, catalyzes the tRNA-independent activation of glutamate in presence of ATP and the subsequent transfer of glutamate onto a tRNA(Asp). Glutamate is transferred on the 2-amino-5-(4,5-dihydroxy-2-cyclopenten-1-yl) moiety of the queuosine in the wobble position of the QUC anticodon. This is Glutamyl-Q tRNA(Asp) synthetase from Pseudomonas putida (strain W619).